The primary structure comprises 159 residues: Cyclic pyranopterin monophosphate synthase (159 aa).

Substrate is bound by residues 76–78 and 114–115; these read LCH and ME. Aspartate 129 is a catalytic residue.

This sequence belongs to the MoaC family. Homohexamer; trimer of dimers.

The catalysed reaction is (8S)-3',8-cyclo-7,8-dihydroguanosine 5'-triphosphate = cyclic pyranopterin phosphate + diphosphate. It functions in the pathway cofactor biosynthesis; molybdopterin biosynthesis. In terms of biological role, catalyzes the conversion of (8S)-3',8-cyclo-7,8-dihydroguanosine 5'-triphosphate to cyclic pyranopterin monophosphate (cPMP). The chain is Cyclic pyranopterin monophosphate synthase from Oleidesulfovibrio alaskensis (strain ATCC BAA-1058 / DSM 17464 / G20) (Desulfovibrio alaskensis).